The sequence spans 77 residues: uncharacterized protein (77 aa).

Residues 54-77 (HHGRKHKEDMEARHEQLTKGGTIL) are disordered. Basic and acidic residues predominate over residues 59–70 (HKEDMEARHEQL).

This is an uncharacterized protein from Escherichia coli O157:H7.